Consider the following 423-residue polypeptide: D-tagatose-1,6-bisphosphate aldolase subunit GatZ (423 aa).

This sequence belongs to the GatZ/KbaZ family. GatZ subfamily. In terms of assembly, forms a complex with GatY.

It participates in carbohydrate metabolism; D-tagatose 6-phosphate degradation; D-glyceraldehyde 3-phosphate and glycerone phosphate from D-tagatose 6-phosphate: step 2/2. Its function is as follows. Component of the tagatose-1,6-bisphosphate aldolase GatYZ that is required for full activity and stability of the Y subunit. Could have a chaperone-like function for the proper and stable folding of GatY. When expressed alone, GatZ does not show any aldolase activity. Is involved in the catabolism of galactitol. In Salmonella enteritidis PT4 (strain P125109), this protein is D-tagatose-1,6-bisphosphate aldolase subunit GatZ.